Consider the following 156-residue polypeptide: Endoribonuclease YbeY (156 aa).

Positions 122, 126, and 132 each coordinate Zn(2+).

It belongs to the endoribonuclease YbeY family. It depends on Zn(2+) as a cofactor.

The protein resides in the cytoplasm. Its function is as follows. Single strand-specific metallo-endoribonuclease involved in late-stage 70S ribosome quality control and in maturation of the 3' terminus of the 16S rRNA. This Bacillus cereus (strain G9842) protein is Endoribonuclease YbeY.